The primary structure comprises 79 residues: Small integral membrane protein 40 (79 aa).

The helical transmembrane segment at 35–55 (FFIFLALFLTLLMLEAAYKLL) threads the bilayer.

It localises to the membrane. This Homo sapiens (Human) protein is Small integral membrane protein 40.